The sequence spans 327 residues: tRNA uridine(34) hydroxylase (327 aa).

In terms of domain architecture, Rhodanese spans 130-224 (LDEDTVVLDT…YGKDPEVQGE (95 aa)). C184 acts as the Cysteine persulfide intermediate in catalysis.

It belongs to the TrhO family.

It catalyses the reaction uridine(34) in tRNA + AH2 + O2 = 5-hydroxyuridine(34) in tRNA + A + H2O. Functionally, catalyzes oxygen-dependent 5-hydroxyuridine (ho5U) modification at position 34 in tRNAs. The sequence is that of tRNA uridine(34) hydroxylase from Streptococcus thermophilus (strain ATCC BAA-491 / LMD-9).